The sequence spans 305 residues: MSFTSDVKKELTSNLATTGALLALVRMNGSVGIFNGLTLSITTENAGTAKYIYQMLRELYDVHAEIRVHQKTTLSKNRVYTVFITEGASELLDELSLADSLMLDNGVPEFVKNDEFIKKDYLRGAFLSAGSLHNPEKGEYQLSIASVYQEHAEDLQEIFRDFGLNARVIERKNRWILYLSKAEEIMDFLTLIGAMKARLKFEEAKIMREMRGLANRQSNFENANIAKSVMAAQEAINAIKFLNERKELEQLPENLKEIARVRLENPEATIKELGELLEPSLGKSGVNHRLRKLVEQANELRKIEN.

Residues 269 to 302 (TIKELGELLEPSLGKSGVNHRLRKLVEQANELRK) constitute a DNA-binding region (H-T-H motif).

The protein belongs to the WhiA family.

Functionally, involved in cell division and chromosome segregation. In Lactococcus lactis subsp. lactis (strain IL1403) (Streptococcus lactis), this protein is Probable cell division protein WhiA.